We begin with the raw amino-acid sequence, 374 residues long: Chaperone protein DnaJ (374 aa).

The region spanning 5-70 (DYYEVLGVNL…RKRASYDQFG (66 aa)) is the J domain. The CR-type zinc-finger motif lies at 133-210 (GLSRTIKVPT…CHGQGRQQQT (78 aa)). Residues C146, C149, C162, C165, C184, C187, C198, and C201 each contribute to the Zn(2+) site. CXXCXGXG motif repeat units lie at residues 146–153 (CKTCNGSG), 162–169 (CPRCNGSG), 184–191 (CSVCRGRG), and 198–205 (CTDCHGQG).

This sequence belongs to the DnaJ family. As to quaternary structure, homodimer. Zn(2+) is required as a cofactor.

It is found in the cytoplasm. In terms of biological role, participates actively in the response to hyperosmotic and heat shock by preventing the aggregation of stress-denatured proteins and by disaggregating proteins, also in an autonomous, DnaK-independent fashion. Unfolded proteins bind initially to DnaJ; upon interaction with the DnaJ-bound protein, DnaK hydrolyzes its bound ATP, resulting in the formation of a stable complex. GrpE releases ADP from DnaK; ATP binding to DnaK triggers the release of the substrate protein, thus completing the reaction cycle. Several rounds of ATP-dependent interactions between DnaJ, DnaK and GrpE are required for fully efficient folding. Also involved, together with DnaK and GrpE, in the DNA replication of plasmids through activation of initiation proteins. This Coxiella burnetii (strain RSA 331 / Henzerling II) protein is Chaperone protein DnaJ.